We begin with the raw amino-acid sequence, 333 residues long: MSEIGTRVYTECDADLSLIQNVLVAVIGYGSQGHAQALNLRDSGVNVVIGLKENSASRKSAQDSGFEVLLPQEAAKKAQLISLLVPDPAQRDVYESAIKHNLSEGDALLFSHGFNIRYGYITPPDGVDVLMVAPKGPGHMVRREYLDNRGTPAVFAIEKDASGRCFDLALSYAKGIGALRAGAIQTTFTEETETDLFGEQAVLCGGLEQLIQYGYETLVEAGYQPEVAYFEVLHELKLIIDLIVEGGLSKSRWSISDTAEYGSYVSGPRVIDKHVKENMKKILGEIRSGEFANRFIKDQDSGANEFTQLREIAARHPIEEVGARLRALFSWSK.

The 181-residue stretch at 6–186 (TRVYTECDAD…GALRAGAIQT (181 aa)) folds into the KARI N-terminal Rossmann domain. NADP(+) contacts are provided by residues 29–32 (YGSQ), K52, S55, S57, and 87–90 (DPAQ). Residue H112 is part of the active site. G138 is an NADP(+) binding site. Residues 187–332 (TFTEETETDL…ARLRALFSWS (146 aa)) enclose the KARI C-terminal knotted domain. Positions 195, 199, 231, and 235 each coordinate Mg(2+). S256 is a substrate binding site.

This sequence belongs to the ketol-acid reductoisomerase family. Requires Mg(2+) as cofactor.

It catalyses the reaction (2R)-2,3-dihydroxy-3-methylbutanoate + NADP(+) = (2S)-2-acetolactate + NADPH + H(+). The enzyme catalyses (2R,3R)-2,3-dihydroxy-3-methylpentanoate + NADP(+) = (S)-2-ethyl-2-hydroxy-3-oxobutanoate + NADPH + H(+). Its pathway is amino-acid biosynthesis; L-isoleucine biosynthesis; L-isoleucine from 2-oxobutanoate: step 2/4. It participates in amino-acid biosynthesis; L-valine biosynthesis; L-valine from pyruvate: step 2/4. In terms of biological role, involved in the biosynthesis of branched-chain amino acids (BCAA). Catalyzes an alkyl-migration followed by a ketol-acid reduction of (S)-2-acetolactate (S2AL) to yield (R)-2,3-dihydroxy-isovalerate. In the isomerase reaction, S2AL is rearranged via a Mg-dependent methyl migration to produce 3-hydroxy-3-methyl-2-ketobutyrate (HMKB). In the reductase reaction, this 2-ketoacid undergoes a metal-dependent reduction by NADPH to yield (R)-2,3-dihydroxy-isovalerate. The polypeptide is Ketol-acid reductoisomerase (NADP(+)) (Tropheryma whipplei (strain Twist) (Whipple's bacillus)).